We begin with the raw amino-acid sequence, 1563 residues long: Integrator complex subunit 5-like protein (1563 aa).

Composition is skewed to basic and acidic residues over residues 1-21 (MKEEETIEISEKEKDKERNDN) and 31-44 (EDWRNEETATKNEN). Disordered stretches follow at residues 1 to 63 (MKEE…YDDD), 102 to 208 (KKSK…NITY), and 270 to 310 (NSLN…QQNP). Acidic residues predominate over residues 52-63 (GDSDDDDYYDDD). 2 stretches are compositionally biased toward low complexity: residues 109-133 (TAATTTTTTTTTTTTTTTTTPTATA) and 141-202 (NNLL…NNNN). Residues 350–370 (DSIINWSLSTLTIITRLLIIL) form a helical membrane-spanning segment. A compositionally biased stretch (low complexity) spans 381–398 (QQQQQQQQQQQQQQQQQQ). Disordered stretches follow at residues 381–417 (QQQQQQQQQQQQQQQQQQTKNKTQFPPPPPPPLRQPI), 466–498 (SKSSSSSSSSSSSSSSSSSSSSSSSSSSSSSKT), 637–694 (FDNN…DNSS), and 784–828 (ILNN…SQEI). A compositionally biased stretch (pro residues) spans 405–414 (FPPPPPPPLR). Composition is skewed to low complexity over residues 468-496 (SSSSSSSSSSSSSSSSSSSSSSSSSSSSS), 639-686 (NNNN…NNNN), and 786-824 (NNNNNNNNNNNNNNNNNNNNNNNNNNNNNNNNNQQQQQQ). A helical membrane pass occupies residues 877 to 897 (IIIKLISLIGMDSIYSSLIIL). Disordered regions lie at residues 1154-1173 (SGNFGNGDDDDDEYGDDEYG) and 1268-1303 (KQRMKKKKQSIQQNGNINNEQQQEEDDNDDADDQNE). Residues 1160 to 1172 (GDDDDDEYGDDEY) show a composition bias toward acidic residues. The span at 1277–1288 (SIQQNGNINNEQ) shows a compositional bias: low complexity. Acidic residues predominate over residues 1289–1303 (QQEEDDNDDADDQNE).

The protein belongs to the Integrator subunit 5 family. As to quaternary structure, component of the Integrator complex. The core complex associates with protein phosphatase 2A subunits, to form the Integrator-PP2A (INTAC) complex.

The protein localises to the nucleus. It is found in the cytoplasm. The protein resides in the nucleus membrane. Its function is as follows. Component of the integrator complex, a multiprotein complex that terminates RNA polymerase II (Pol II) transcription in the promoter-proximal region of genes. The integrator complex provides a quality checkpoint during transcription elongation by driving premature transcription termination of transcripts that are unfavorably configured for transcriptional elongation: the complex terminates transcription by (1) catalyzing dephosphorylation of the C-terminal domain (CTD) of Pol II subunit polr2a, (2) degrading the exiting nascent RNA transcript via endonuclease activity and (3) promoting the release of Pol II from bound DNA. The integrator complex is also involved in terminating the synthesis of non-coding Pol II transcripts, such as enhancer RNAs (eRNAs), small nuclear RNAs (snRNAs), telomerase RNAs and long non-coding RNAs (lncRNAs). The polypeptide is Integrator complex subunit 5-like protein (Dictyostelium discoideum (Social amoeba)).